We begin with the raw amino-acid sequence, 158 residues long: Non-specific lipid transfer protein GPI-anchored 29 (158 aa).

Residues 1 to 24 form the signal peptide; sequence MAYFSTATSLLLLVLSVSSPYVHG. 4 disulfides stabilise this stretch: Cys-28/Cys-71, Cys-38/Cys-55, Cys-56/Cys-95, and Cys-69/Cys-105. An N-linked (GlcNAc...) asparagine glycan is attached at Asn-84. Ser-134 carries GPI-anchor amidated serine lipidation. A propeptide spans 135–158 (removed in mature form); the sequence is KGNSLIPISGFSFVIVTALAMFRI.

The protein belongs to the plant LTP family. Confined to the ovaries of the inflorescence.

The protein localises to the secreted. It localises to the cell membrane. Probable lipid transfer protein. The protein is Non-specific lipid transfer protein GPI-anchored 29 of Arabidopsis thaliana (Mouse-ear cress).